A 370-amino-acid polypeptide reads, in one-letter code: GTPase Obg (370 aa).

Positions 1 to 159 constitute an Obg domain; the sequence is MKFVDEAYID…KKLKLELRVL (159 aa). The OBG-type G domain maps to 160–333; that stretch reads ADVGLLGMPN…LVQAIYQHVA (174 aa). GTP-binding positions include 166-173, 191-195, 213-216, 283-286, and 314-316; these read GMPNAGKS, FTTLH, DVPG, NKLD, and SAL. Mg(2+)-binding residues include serine 173 and threonine 193. Residues 346–370 are disordered; sequence FAEPEADESDDEPRFAPQADDPRFR.

This sequence belongs to the TRAFAC class OBG-HflX-like GTPase superfamily. OBG GTPase family. As to quaternary structure, monomer. The cofactor is Mg(2+).

Its subcellular location is the cytoplasm. Functionally, an essential GTPase which binds GTP, GDP and possibly (p)ppGpp with moderate affinity, with high nucleotide exchange rates and a fairly low GTP hydrolysis rate. Plays a role in control of the cell cycle, stress response, ribosome biogenesis and in those bacteria that undergo differentiation, in morphogenesis control. The sequence is that of GTPase Obg from Methylibium petroleiphilum (strain ATCC BAA-1232 / LMG 22953 / PM1).